The following is a 396-amino-acid chain: Cell adhesion molecule 3 (396 aa).

A signal peptide spans 1 to 22; that stretch reads MGAPSALPLLLLLACSWAPGGA. Positions 23–124 constitute an Ig-like V-type domain; the sequence is NLSQDDSQPW…VRTAKSLVTV (102 aa). The Extracellular portion of the chain corresponds to 23–328; the sequence is NLSQDDSQPW…PVPSSSSTYH (306 aa). 3 cysteine pairs are disulfide-bonded: Cys48/Cys108, Cys150/Cys207, and Cys252/Cys297. 2 consecutive Ig-like C2-type domains span residues 128–226 and 231–313; these read PQKP…QRIE and PTAM…FTLN. Asn288 carries N-linked (GlcNAc...) asparagine glycosylation. A helical membrane pass occupies residues 329–349; that stretch reads AIIGGIVAFIVFLLLILLIFL. Over 350–396 the chain is Cytoplasmic; sequence GHYLIRHKGTYLTHEAKGSDDAPDADTAIINAEGGQSGGDDKKEYFI. A disordered region spans residues 365–396; that stretch reads AKGSDDAPDADTAIINAEGGQSGGDDKKEYFI. A Phosphoserine modification is found at Ser386.

It belongs to the nectin family. In terms of assembly, homodimer. Can form trans-heterodimers with NECTIN3. Interacts with EPB41L1, DLG3, PALS2 and CASK. In terms of tissue distribution, mainly expressed in brain, in neuronal cell bodies of cerebellum, cortex, hippocampus, hypothalamus and spinal cord. In spinal cord predominantly expressed in motor neurons. Expressed in axons, presynaptic nerve terminals, glia cell processes.

It localises to the cell membrane. It is found in the cell junction. In terms of biological role, involved in cell-cell adhesion. Has both calcium-independent homophilic cell-cell adhesion activity and calcium-independent heterophilic cell-cell adhesion activity with IGSF4, NECTIN1 and NECTIN3. Interaction with EPB41L1 may regulate structure or function of cell-cell junctions. The protein is Cell adhesion molecule 3 (Cadm3) of Mus musculus (Mouse).